A 507-amino-acid polypeptide reads, in one-letter code: Alkyl hydroperoxide reductase subunit F (507 aa).

FAD is bound at residue 207 to 222 (DVLIVGGGPASGSAAI). Cys-335 and Cys-338 are joined by a disulfide. Position 347 to 361 (347 to 361 (DVAVIGGGNSGVEAA)) interacts with NAD(+). Position 467–477 (467–477 (TNVPGIFAAGD)) interacts with FAD.

Belongs to the class-II pyridine nucleotide-disulfide oxidoreductase family. Homodimer. Requires FAD as cofactor.

Serves to protect the cell against DNA damage by alkyl hydroperoxides. It can use either NADH or NADPH as electron donor for direct reduction of redox dyes or of alkyl hydroperoxides when combined with the AhpC protein. This chain is Alkyl hydroperoxide reductase subunit F (ahpF), found in Staphylococcus epidermidis (strain ATCC 12228 / FDA PCI 1200).